The sequence spans 369 residues: tRNA-specific 2-thiouridylase MnmA (369 aa).

Residues 16–23 and Met-42 contribute to the ATP site; that span reads AMSGGVDS. The active-site Nucleophile is the Cys-110. Cys-110 and Cys-206 are disulfide-bonded. Gly-134 lines the ATP pocket. An interaction with tRNA region spans residues 156 to 158; it reads KDQ. Cys-206 functions as the Cysteine persulfide intermediate in the catalytic mechanism.

It belongs to the MnmA/TRMU family.

Its subcellular location is the cytoplasm. It carries out the reaction S-sulfanyl-L-cysteinyl-[protein] + uridine(34) in tRNA + AH2 + ATP = 2-thiouridine(34) in tRNA + L-cysteinyl-[protein] + A + AMP + diphosphate + H(+). Catalyzes the 2-thiolation of uridine at the wobble position (U34) of tRNA, leading to the formation of s(2)U34. The sequence is that of tRNA-specific 2-thiouridylase MnmA from Orientia tsutsugamushi (strain Boryong) (Rickettsia tsutsugamushi).